We begin with the raw amino-acid sequence, 209 residues long: FMN-dependent NADH:quinone oxidoreductase (209 aa).

FMN is bound by residues Ser10, 16–18 (SHS), and 98–101 (MWNF).

The protein belongs to the azoreductase type 1 family. Homodimer. FMN is required as a cofactor.

It carries out the reaction 2 a quinone + NADH + H(+) = 2 a 1,4-benzosemiquinone + NAD(+). The enzyme catalyses N,N-dimethyl-1,4-phenylenediamine + anthranilate + 2 NAD(+) = 2-(4-dimethylaminophenyl)diazenylbenzoate + 2 NADH + 2 H(+). Functionally, quinone reductase that provides resistance to thiol-specific stress caused by electrophilic quinones. Its function is as follows. Also exhibits azoreductase activity. Catalyzes the reductive cleavage of the azo bond in aromatic azo compounds to the corresponding amines. This chain is FMN-dependent NADH:quinone oxidoreductase, found in Nitratidesulfovibrio vulgaris (strain ATCC 29579 / DSM 644 / CCUG 34227 / NCIMB 8303 / VKM B-1760 / Hildenborough) (Desulfovibrio vulgaris).